Here is a 310-residue protein sequence, read N- to C-terminus: p-hydroxybenzoic acid efflux pump subunit AaeA (310 aa).

A helical membrane pass occupies residues A12–Y32.

It belongs to the membrane fusion protein (MFP) (TC 8.A.1) family.

It is found in the cell inner membrane. Forms an efflux pump with AaeB. In Citrobacter koseri (strain ATCC BAA-895 / CDC 4225-83 / SGSC4696), this protein is p-hydroxybenzoic acid efflux pump subunit AaeA.